The following is a 339-amino-acid chain: Glycerol-3-phosphate dehydrogenase [NAD(P)+] (339 aa).

NADPH is bound by residues Ser15, Tyr16, His36, and Lys110. Residues Lys110, Gly139, and Thr141 each contribute to the sn-glycerol 3-phosphate site. Position 143 (Ala143) interacts with NADPH. The sn-glycerol 3-phosphate site is built by Lys195, Asp248, Ser258, Arg259, and Asn260. Lys195 functions as the Proton acceptor in the catalytic mechanism. Arg259 contacts NADPH. NADPH is bound by residues Val283 and Glu285.

It belongs to the NAD-dependent glycerol-3-phosphate dehydrogenase family.

The protein resides in the cytoplasm. It catalyses the reaction sn-glycerol 3-phosphate + NAD(+) = dihydroxyacetone phosphate + NADH + H(+). The enzyme catalyses sn-glycerol 3-phosphate + NADP(+) = dihydroxyacetone phosphate + NADPH + H(+). Its pathway is membrane lipid metabolism; glycerophospholipid metabolism. In terms of biological role, catalyzes the reduction of the glycolytic intermediate dihydroxyacetone phosphate (DHAP) to sn-glycerol 3-phosphate (G3P), the key precursor for phospholipid synthesis. This Escherichia coli O17:K52:H18 (strain UMN026 / ExPEC) protein is Glycerol-3-phosphate dehydrogenase [NAD(P)+].